Here is a 66-residue protein sequence, read N- to C-terminus: MPKMKTHRGAAKRVKRTASGQLKRSRAFTSHLFANKSTKQKRQLRKARLVSKSDMKRVKQLLAYKK.

Basic residues-rich tracts occupy residues 1–16 (MPKM…RVKR) and 38–49 (TKQKRQLRKARL). Residues 1–49 (MPKMKTHRGAAKRVKRTASGQLKRSRAFTSHLFANKSTKQKRQLRKARL) are disordered.

It belongs to the bacterial ribosomal protein bL35 family.

This Staphylococcus aureus (strain MSSA476) protein is Large ribosomal subunit protein bL35.